The primary structure comprises 142 residues: Small ribosomal subunit protein uS12 (142 aa).

The tract at residues 1–44 (MANGKYAARKLKQDRQQRRWSDSEYARRERGLGAKSDPLEGAPQ) is disordered. Residues 11 to 32 (LKQDRQQRRWSDSEYARRERGL) show a composition bias toward basic and acidic residues.

It belongs to the universal ribosomal protein uS12 family. Part of the 30S ribosomal subunit.

Functionally, with S4 and S5 plays an important role in translational accuracy. Located at the interface of the 30S and 50S subunits. This Haloquadratum walsbyi (strain DSM 16790 / HBSQ001) protein is Small ribosomal subunit protein uS12.